Consider the following 554-residue polypeptide: Pigment biosynthesis transcriptional activator pigB (554 aa).

The tract at residues 1–21 (MFTSSSPEQRKPRQSRQLPGA) is disordered. Positions 23–40 (CEECRRKKLRCDRQQPQC) form a DNA-binding region, zn(2)-C6 fungal-type.

It localises to the nucleus. Functionally, transcription factor; part of the gene cluster that mediates the biosynthesis of azaphilone pigments (MonAzPs), a complex mixture of compounds with a common azaphilone skeleton very widely used as food colorants. Positively regulates the expression of the azaphilone pigments (MonAzPs) gene cluster. This is Pigment biosynthesis transcriptional activator pigB from Monascus ruber (Mold).